The primary structure comprises 275 residues: Phosphonoacetaldehyde hydrolase (275 aa).

The active-site Nucleophile is Asp-15. Asp-15 and Ala-17 together coordinate Mg(2+). The active-site Schiff-base intermediate with substrate is Lys-56. Asp-189 is a binding site for Mg(2+).

Belongs to the HAD-like hydrolase superfamily. PhnX family. As to quaternary structure, homodimer. Mg(2+) serves as cofactor.

The catalysed reaction is phosphonoacetaldehyde + H2O = acetaldehyde + phosphate + H(+). In terms of biological role, involved in phosphonate degradation. This chain is Phosphonoacetaldehyde hydrolase, found in Pseudomonas fluorescens (strain Pf0-1).